The sequence spans 621 residues: 1-deoxy-D-xylulose-5-phosphate synthase (621 aa).

Residues H80 and 121 to 123 (GHS) contribute to the thiamine diphosphate site. D152 serves as a coordination point for Mg(2+). Thiamine diphosphate is bound by residues 153 to 154 (GA), N181, Y288, and E370. Residue N181 coordinates Mg(2+).

The protein belongs to the transketolase family. DXPS subfamily. As to quaternary structure, homodimer. Mg(2+) serves as cofactor. It depends on thiamine diphosphate as a cofactor.

The enzyme catalyses D-glyceraldehyde 3-phosphate + pyruvate + H(+) = 1-deoxy-D-xylulose 5-phosphate + CO2. It functions in the pathway metabolic intermediate biosynthesis; 1-deoxy-D-xylulose 5-phosphate biosynthesis; 1-deoxy-D-xylulose 5-phosphate from D-glyceraldehyde 3-phosphate and pyruvate: step 1/1. Functionally, catalyzes the acyloin condensation reaction between C atoms 2 and 3 of pyruvate and glyceraldehyde 3-phosphate to yield 1-deoxy-D-xylulose-5-phosphate (DXP). The sequence is that of 1-deoxy-D-xylulose-5-phosphate synthase from Vibrio vulnificus (strain CMCP6).